A 1100-amino-acid polypeptide reads, in one-letter code: MSDSDDYLQDDPDDQAFDDFADVASSPPPPKRRRLQARNQTRNTTSRRNEDNSVASDSDSFVVDDDDASKTDELPSPSQASYHFADHPENEASSKYKIFVPKRNNPQENIFVTQLTQPPSPPEMIRGPRWKKPDPPPPPPPAPTKPTPKTTRGPGHEDYGDDEDLDAAIAASLASFEEENSRLSFSTAQNSPPAPVASDNAPTNTAQTESFDFLDDIPDDAFDSDLSLTPPPPAPPSNSSRPSSFMQSSNRPLGVRQTTLFNMATRNQAPQPPQGEQVFAPPEKVEAPTQHKLNQEAISTWVYPTNLGKTRDYQFNITQKGLFHNLLVALPTGLGKTFIAATIMLNWFRWTRDAQIVFVAPTKPLVAQQVSACFGVAGIPRSQTTMLTGEAAPGIRAQEWQDKRVFFMTPQTLINDLKSGIADPKRIVLLVVDEAHRATGGYAYVEVVKFLRRYNQSFRVLALTATPGSTVESVQAVIDGLEISKVEIRTEQSLDIREYVHARNTEVQTFKNSEEMVLCMDLLSKTLQPLVDQLRTLNAYWGRDPMALTAYGLTKSRQQWMLSDAGRNSSFGLKGKVNAIFTVLASLAHGIDLLKYHGITPFYRHLLHFQGNTDGQKGGKYQRQIVQDEHFKKLMNHLSPWTKNPEFIGHPKLEYLKQVVLNHFMDAGEGSAGAEGASQSTTRVMIFVHFRDSAEEVARVLKRYEPMIRPQVFVGQASAKGSDGMNQKTQLGVVQKFKQGTYNTIVATSIGEEGLDIGEVDLIVCYDSSASPIRMLQRMGRTGRKRAGNIVLLLMEGKEEESYIKAKDNYEKMQQMIASGTRFTFHDDKSPRILPPGVKPIVDKRHIDIPEENEEQALPEPKRRGRVPKKPPKKFHMPDNVITGFTKASSLAGGSKRTAQDKRKARTPTPEPVDIPALEDVILTAEQQRELEHRYCTIGDTSPEVIRTPRTDAFPRLQLVSRPTKVVKHGSLTRRMIDALQKMDKTSSDCEGRFKEVLALESRRPAEESLIHQSISRPGNKKRLRKGRSGQPEPRLPPSRVHEEKDEDLDGSQPISPEQLLSSFTDRQGPKPFSSSPRSENLELDADFEAPDLDTLLGRR.

Over residues 1-21 the composition is skewed to acidic residues; it reads MSDSDDYLQDDPDDQAFDDFA. The tract at residues 1–250 is disordered; the sequence is MSDSDDYLQD…RPSSFMQSSN (250 aa). Over residues 38–61 the composition is skewed to low complexity; sequence RNQTRNTTSRRNEDNSVASDSDSF. A compositionally biased stretch (basic and acidic residues) spans 84–94; the sequence is FADHPENEASS. Residues 104 to 117 are compositionally biased toward polar residues; sequence NNPQENIFVTQLTQ. A compositionally biased stretch (pro residues) spans 135–146; it reads PPPPPPPAPTKP. Polar residues-rich tracts occupy residues 182–191 and 200–209; these read RLSFSTAQNS and NAPTNTAQTE. Acidic residues predominate over residues 212–223; that stretch reads DFLDDIPDDAFD. Residues 237–249 are compositionally biased toward low complexity; it reads SNSSRPSSFMQSS. Residues 317–485 enclose the Helicase ATP-binding domain; that stretch reads ITQKGLFHNL…AVIDGLEISK (169 aa). 330–337 serves as a coordination point for ATP; the sequence is LPTGLGKT. Positions 433 to 436 match the DEAH box motif; it reads DEAH. The Helicase C-terminal domain occupies 655-829; the sequence is YLKQVVLNHF…GTRFTFHDDK (175 aa). Disordered stretches follow at residues 850–913 and 1003–1100; these read PEEN…PEPV and RRPA…LGRR. 2 stretches are compositionally biased toward basic residues: residues 863 to 875 and 1019 to 1028; these read RRGRVPKKPPKKF and GNKKRLRKGR. Polar residues predominate over residues 1053–1066; that stretch reads QPISPEQLLSSFTD. Residues 1082 to 1092 show a composition bias toward acidic residues; the sequence is LELDADFEAPD.

This sequence belongs to the DEAD box helicase family. DEAH subfamily. FANCM sub-subfamily. Interacts with the MHF histone-fold complex to form the FANCM-MHF complex.

It is found in the nucleus. The enzyme catalyses ATP + H2O = ADP + phosphate + H(+). ATP-dependent DNA helicase involved in DNA damage repair by homologous recombination and in genome maintenance. Capable of unwinding D-loops. Plays a role in limiting crossover recombinants during mitotic DNA double-strand break (DSB) repair. Component of a FANCM-MHF complex which promotes gene conversion at blocked replication forks, probably by reversal of the stalled fork. The polypeptide is ATP-dependent DNA helicase mph1 (Aspergillus terreus (strain NIH 2624 / FGSC A1156)).